A 377-amino-acid chain; its full sequence is Glycine oxidase (377 aa).

Residues 14–15 (VI), 34–35 (EK), 42–43 (AS), 47–49 (AGM), and Val-180 contribute to the FAD site. Substrate contacts are provided by Arg-309 and Arg-336. 334–340 (HYRNGIL) provides a ligand contact to FAD.

The protein belongs to the DAO family. ThiO subfamily. As to quaternary structure, homotetramer. Requires FAD as cofactor.

It catalyses the reaction glycine + O2 + H2O = glyoxylate + H2O2 + NH4(+). It carries out the reaction N-ethylglycine + O2 + H2O = ethylamine + glyoxylate + H2O2. The enzyme catalyses sarcosine + O2 + H2O = methylamine + glyoxylate + H2O2. The catalysed reaction is D-alanine + O2 + H2O = pyruvate + H2O2 + NH4(+). It participates in cofactor biosynthesis; thiamine diphosphate biosynthesis. Its activity is regulated as follows. Is inhibited at high substrate concentration. In terms of biological role, catalyzes the FAD-dependent oxidative deamination of various amines and D-amino acids to yield the corresponding alpha-keto acids, ammonia/amine, and hydrogen peroxide. Oxidizes glycine, sarcosine (N-methylglycine), N-ethylglycine, D-proline, D-alanine, glycine-ethyl ester, and some other D-amino acids. Does not act on L-proline. Is essential for thiamine biosynthesis since the oxidation of glycine catalyzed by ThiO generates the glycine imine intermediate (dehydroglycine) required for the biosynthesis of the thiazole ring of thiamine pyrophosphate. The sequence is that of Glycine oxidase from Geobacillus kaustophilus (strain HTA426).